Consider the following 178-residue polypeptide: Large ribosomal subunit protein uL10 (178 aa).

It belongs to the universal ribosomal protein uL10 family. In terms of assembly, part of the ribosomal stalk of the 50S ribosomal subunit. The N-terminus interacts with L11 and the large rRNA to form the base of the stalk. The C-terminus forms an elongated spine to which L12 dimers bind in a sequential fashion forming a multimeric L10(L12)X complex.

Forms part of the ribosomal stalk, playing a central role in the interaction of the ribosome with GTP-bound translation factors. This is Large ribosomal subunit protein uL10 from Mycobacterium tuberculosis (strain ATCC 25177 / H37Ra).